The following is a 450-amino-acid chain: Interferon regulatory factor 4 (450 aa).

A DNA-binding region (IRF tryptophan pentad repeat) is located at residues 21–129 (NGKLRQWLID…DPYKVYRIVP (109 aa)). Residues Ser-446 and Ser-447 each carry the phosphoserine; by ROCK2 modification.

It belongs to the IRF family. In terms of assembly, interacts with SPIB and DEF6. Interacts with the BATF-JUNB heterodimer. Interacts with BATF (via bZIP domain); the interaction is direct. Directly interacts with NLRP3 in the nucleus of Th2 cells; this interaction enhances IRF4 ability to bind to the IL4 promoter and is required for optimal IRF4-dependent IL4 transcription. Interacts with SPI1. In terms of processing, phosphorylation by ROCK2 regulates IL-17 and IL-21 production. Lymphoid cells.

Its subcellular location is the nucleus. It is found in the cytoplasm. In terms of biological role, transcriptional activator. Binds to the interferon-stimulated response element (ISRE) of the MHC class I promoter. Binds the immunoglobulin lambda light chain enhancer, together with PU.1. Probably plays a role in ISRE-targeted signal transduction mechanisms specific to lymphoid cells. Involved in CD8(+) dendritic cell differentiation by forming a complex with the BATF-JUNB heterodimer in immune cells, leading to recognition of AICE sequence (5'-TGAnTCA/GAAA-3'), an immune-specific regulatory element, followed by cooperative binding of BATF and IRF4 and activation of genes. This is Interferon regulatory factor 4 from Mus musculus (Mouse).